The sequence spans 398 residues: Mu-type opioid receptor (398 aa).

At 1 to 66 (MDSSAGPGNI…CPQTGSPSMV (66 aa)) the chain is on the extracellular side. N-linked (GlcNAc...) asparagine glycans are attached at residues N9, N31, N38, and N46. Residues 67–91 (TAITIMALYSIVCVVGLFGNFLVMY) traverse the membrane as a helical segment. Over 92–104 (VIVRYTKMKTATN) the chain is Cytoplasmic. A helical membrane pass occupies residues 105 to 129 (IYIFNLALADALATSTLPFQSVNYL). Over 130–140 (MGTWPFGNILC) the chain is Extracellular. A disulfide bridge links C140 with C217. Residues 141 to 163 (KIVISIDYYNMFTSIFTLCTMSV) form a helical membrane-spanning segment. The Cytoplasmic portion of the chain corresponds to 164-183 (DRYIAVCHPVKALDFRTPRN). A Phosphotyrosine modification is found at Y166. Residues 184–205 (AKIVNVCNWILSSAIGLPVMFM) form a helical membrane-spanning segment. The Extracellular portion of the chain corresponds to 206–228 (ATTKYRQGSIDCTLTFSHPTWYW). A helical transmembrane segment spans residues 229–253 (ENLLKICVFIFAFIMPVLIITVCYG). The Cytoplasmic segment spans residues 254 to 277 (LMILRLKSVRMLSGSKEKDRNLRR). A helical membrane pass occupies residues 278 to 304 (ITRMVLVVVAVFIVCWTPIHIYVIIKA). The Extracellular portion of the chain corresponds to 305–312 (LITIPETT). A helical membrane pass occupies residues 313 to 336 (FQTVSWHFCIALGYTNSCLNPVLY). Residues 332-336 (NPVLY) carry the NPxxY; plays a role in stabilizing the activated conformation of the receptor motif. At 337-398 (AFLDENFKRC…NLEAETAPLP (62 aa)) the chain is on the cytoplasmic side. The S-palmitoyl cysteine moiety is linked to residue C351. A disordered region spans residues 362–383 (NSARIRQNTREHPSTANTVDRT). Residue S363 is modified to Phosphoserine. A Phosphothreonine modification is found at T370. A Phosphoserine modification is found at S375. T394 is modified (phosphothreonine).

Belongs to the G-protein coupled receptor 1 family. In terms of assembly, forms homooligomers and heterooligomers with other GPCRs, such as OPRD1, OPRK1, OPRL1, NPFFR2, ADRA2A, SSTR2, CNR1 and CCR5 (probably in dimeric forms). Interacts with heterotrimeric G proteins; interaction with a heterotrimeric complex containing GNAI1, GNB1 and GNG2 stabilizes the active conformation of the receptor and increases its affinity for endomorphin-2, the synthetic opioid peptide DAMGO and for morphinan agonists. Interacts with PPL; the interaction disrupts agonist-mediated G-protein activation. Interacts (via C-terminus) with DNAJB4 (via C-terminus). Interacts with calmodulin; the interaction inhibits the constitutive activity of OPRM1; it abolishes basal and attenuates agonist-stimulated G-protein coupling. Interacts with FLNA, PLD2, RANBP9 and WLS and GPM6A. Interacts with RTP4. Interacts with SYP and GNAS. Interacts with RGS9, RGS17, RGS20, RGS4, PPP1R9B and HINT1. Isoform 9 interacts with GRPR. In terms of processing, phosphorylated. Differentially phosphorylated in basal and agonist-induced conditions. Agonist-mediated phosphorylation modulates receptor internalization. Phosphorylated by GRK2 in a agonist-dependent manner. Phosphorylation at Tyr-166 requires receptor activation, is dependent on non-receptor protein tyrosine kinase Src and results in a decrease in agonist efficacy by reducing G-protein coupling efficiency. Phosphorylated on tyrosine residues; the phosphorylation is involved in agonist-induced G-protein-independent receptor down-regulation. Phosphorylation at Ser-375 is involved in G-protein-dependent but not beta-arrestin-dependent activation of the ERK pathway. Post-translationally, ubiquitinated. A basal ubiquitination seems not to be related to degradation. Ubiquitination is increased upon formation of OPRM1:OPRD1 oligomers leading to proteasomal degradation; the ubiquitination is diminished by RTP4.

It is found in the cell membrane. It localises to the cell projection. The protein localises to the axon. Its subcellular location is the perikaryon. The protein resides in the dendrite. It is found in the endosome. Its function is as follows. Receptor for endogenous opioids such as beta-endorphin and endomorphin. Receptor for natural and synthetic opioids including morphine, heroin, DAMGO, fentanyl, etorphine, buprenorphin and methadone. Also activated by enkephalin peptides, such as Met-enkephalin or Met-enkephalin-Arg-Phe, with higher affinity for Met-enkephalin-Arg-Phe. Agonist binding to the receptor induces coupling to an inactive GDP-bound heterotrimeric G-protein complex and subsequent exchange of GDP for GTP in the G-protein alpha subunit leading to dissociation of the G-protein complex with the free GTP-bound G-protein alpha and the G-protein beta-gamma dimer activating downstream cellular effectors. The agonist- and cell type-specific activity is predominantly coupled to pertussis toxin-sensitive G(i) and G(o) G alpha proteins, GNAI1, GNAI2, GNAI3 and GNAO1 isoforms Alpha-1 and Alpha-2, and to a lesser extent to pertussis toxin-insensitive G alpha proteins GNAZ and GNA15. They mediate an array of downstream cellular responses, including inhibition of adenylate cyclase activity and both N-type and L-type calcium channels, activation of inward rectifying potassium channels, mitogen-activated protein kinase (MAPK), phospholipase C (PLC), phosphoinositide/protein kinase (PKC), phosphoinositide 3-kinase (PI3K) and regulation of NF-kappa-B. Also couples to adenylate cyclase stimulatory G alpha proteins. The selective temporal coupling to G-proteins and subsequent signaling can be regulated by RGSZ proteins, such as RGS9, RGS17 and RGS4. Phosphorylation by members of the GPRK subfamily of Ser/Thr protein kinases and association with beta-arrestins is involved in short-term receptor desensitization. Beta-arrestins associate with the GPRK-phosphorylated receptor and uncouple it from the G-protein thus terminating signal transduction. The phosphorylated receptor is internalized through endocytosis via clathrin-coated pits which involves beta-arrestins. The activation of the ERK pathway occurs either in a G-protein-dependent or a beta-arrestin-dependent manner and is regulated by agonist-specific receptor phosphorylation. Acts as a class A G-protein coupled receptor (GPCR) which dissociates from beta-arrestin at or near the plasma membrane and undergoes rapid recycling. Receptor down-regulation pathways are varying with the agonist and occur dependent or independent of G-protein coupling. Endogenous ligands induce rapid desensitization, endocytosis and recycling. Heterooligomerization with other GPCRs can modulate agonist binding, signaling and trafficking properties. Functionally, isoform 9 is involved in morphine-induced scratching and seems to cross-activate GRPR in response to morphine. This chain is Mu-type opioid receptor (Oprm1), found in Mus musculus (Mouse).